Reading from the N-terminus, the 294-residue chain is N-acetylmuramic acid 6-phosphate etherase (294 aa).

Residues 56–219 (TSQALKKGGR…STLSMVSVGK (164 aa)) form the SIS domain. Glu84 serves as the catalytic Proton donor. Residue Glu115 is part of the active site.

The protein belongs to the GCKR-like family. MurNAc-6-P etherase subfamily. As to quaternary structure, homodimer.

It catalyses the reaction N-acetyl-D-muramate 6-phosphate + H2O = N-acetyl-D-glucosamine 6-phosphate + (R)-lactate. It participates in amino-sugar metabolism; 1,6-anhydro-N-acetylmuramate degradation. The protein operates within amino-sugar metabolism; N-acetylmuramate degradation. Its pathway is cell wall biogenesis; peptidoglycan recycling. In terms of biological role, specifically catalyzes the cleavage of the D-lactyl ether substituent of MurNAc 6-phosphate, producing GlcNAc 6-phosphate and D-lactate. Together with AnmK, is also required for the utilization of anhydro-N-acetylmuramic acid (anhMurNAc) either imported from the medium or derived from its own cell wall murein, and thus plays a role in cell wall recycling. This is N-acetylmuramic acid 6-phosphate etherase from Francisella philomiragia subsp. philomiragia (strain ATCC 25017 / CCUG 19701 / FSC 153 / O#319-036).